We begin with the raw amino-acid sequence, 465 residues long: MEPKDFKVIIIGGSVAGLTLALSLNKIGIDYVVLEKRAHIAPQEGASIGILPHGGRILEQLGLFEAVERSIEPLHTAHIRFPDGFEYTTASPSVLNDRFGLPLAFLERQKMLQILFDAQTEKSKILCGKKVTKIEDFEESMTVYTEDGSTYTGDLVVGADGVHSQVRTEMWRLAEKMQPGIVSNTEKSSMTVQYTCVFGISAAVPGLVPGEQVASFNDKRSFLTFPGKNGRVFWFLINRLDQEHSYSSAPRFSMKDTETICHQFLEDIIYGDVRFNDLWSRKEVCSVTALEEGAFRTWSYRRIVCIGDSMHKMAPNTGQGANCAIEDVAALANMLHACVVTTERHCKPTTKELSTLLEGYTKRRFHRIKKIYQASRLVVRLQARETLLLRMMGRYYIPRSGDVPADVASKMIAGAVALDFLPIPSRSGPGWISFKTMESRLRYWIVGGAIPVLLIMSMWLWQVVL.

Residues 9 to 29 (IIIGGSVAGLTLALSLNKIGI) traverse the membrane as a helical segment. Glutamate 35, glycine 49, arginine 108, aspartate 308, and alanine 321 together coordinate FAD.

The protein belongs to the paxM FAD-dependent monooxygenase family. FAD is required as a cofactor.

The protein resides in the membrane. It participates in secondary metabolite biosynthesis; terpenoid biosynthesis. FAD-dependent monooxygenase; part of the gene cluster that mediates the biosynthesis of 15-deoxyoxalicine B. The first step of the pathway is the synthesis of nicotinyl-CoA from nicotinic acid by the nicotinic acid-CoA ligase olcI. Nicotinyl-CoA is then a substrate of polyketide synthase olcA to produce 4-hydroxy-6-(3-pyridinyl)-2H-pyran-2-one (HPPO) which is further prenylated by the polyprenyl transferase olcH to yield geranylgeranyl-HPPO. Geranylgeranyl pyrophosphate is provided by the cluster-specific geranylgeranyl pyrophosphate synthase olcC. The FAD-dependent monooxygenase olcE catalyzes the epoxidation of geranylgeranyl-HPPO and the terpene cyclase olcD catalyzes the cyclization of the terpenoid component, resulting in the formation of the tricyclic terpene moiety seen in predecaturin E. The cytochrome P450 monooxygenase then catalyzes the allylic oxidation of predecaturin E, which is followed by spirocylization with concomitant loss of one molecule of water to form decaturin E. Decaturin E is the substrate of the cytochrome P450 monooxygenase olcJ which hydroxylates it at the C-29 position to form decaturin F. The short-chain dehydrogenase/reductase olcF may catalyze the oxidation of decaturin F to generate the 29-hydroxyl-27-one intermediate, and subsequent hemiacetal formation probably leads to the formation of decaturin C. The dioxygenase olcK may be a peroxisomal enzyme that catalyzes the hydroxylation of decaturin C into decaturin A once decaturin C is shuttled into the peroxisome by the MFS transporter olcL. Finally the cytochrome P450 monooxygenase olcB catalyzes the oxidative rearrangement to yield 15-deoxyoxalicine B. In the absence of olcJ, decaturin E may be shunted to a pathway in which it is oxidized to a ketone, possibly by olcF, to form decaturin D, which undergoes further allylic oxidation to yield decaturin G. Moreover, in the absence of oclK or oclL, oclB can convert decaturin C into 15-deoxyoxalicine A. This Penicillium canescens protein is FAD-dependent monooxygenase olcE.